The chain runs to 516 residues: MTDIHNHKILILDFGSQYTQLIARRVREVGVFCEIFPHDVAADFIKNYQAKGIILSGGPESVYDSDVKAPEIVFELGVPVLGICYGMQTMVMQHGGEVKGADQSEFGKAIINILNLTNNIFSNMEHEQLVWMSHSDKVTQTGEHFEIIASSTNAPVAAVAHKNKPFFGVQFHPETTHTENGKQIIENFVVNICGCDTLWNIENIIENDIKEIKQKVGTDKVILGLSGGVDSSVVAAILHQAIGDQLTCIFVDTGLLRLNEGDQVMQVFAEHMDINVIRINAKNRFLDALRGICDPEQKRKIIGKLFVDIFDEEAAKIENAKWLAQGTIYSDVIESASNNQSKAHVIKSHHNVGGLPKEMKLKLLEPLRELFKDEVRKLGLGLGLPYNMLYRHPFPGPGLGVRILGEIKKEYVETLQKADAIFTEELYKHNLYHDVSQAFGVFLPIKSVGVVGDQRRYEYVIALRAVVSIDFMTATWANLPYDFLSLVSNRIVNEVKQVSRVVYDVTGKPPGTIEWE.

One can recognise a Glutamine amidotransferase type-1 domain in the interval 8-198 (KILILDFGSQ…VVNICGCDTL (191 aa)). The Nucleophile role is filled by Cys-84. Residues His-172 and Glu-174 contribute to the active site. The 193-residue stretch at 199 to 391 (WNIENIIEND…LGLPYNMLYR (193 aa)) folds into the GMPS ATP-PPase domain. Residue 226 to 232 (SGGVDSS) coordinates ATP.

In terms of assembly, homodimer.

It carries out the reaction XMP + L-glutamine + ATP + H2O = GMP + L-glutamate + AMP + diphosphate + 2 H(+). It participates in purine metabolism; GMP biosynthesis; GMP from XMP (L-Gln route): step 1/1. Functionally, catalyzes the synthesis of GMP from XMP. The chain is GMP synthase [glutamine-hydrolyzing] from Francisella tularensis subsp. holarctica (strain LVS).